We begin with the raw amino-acid sequence, 761 residues long: Probable ubiquitin carboxyl-terminal hydrolase creB (761 aa).

A disordered region spans residues 1–45 (MGSFLRSFRHNGGSTAPSVGAVPAKKEPQPPPMTPLEKRLLDMGP). Basic and acidic residues predominate over residues 36-45 (LEKRLLDMGP). One can recognise a USP domain in the interval 55–468 (YGMENYGNTC…CAYVLFYQET (414 aa)). The active-site Nucleophile is the cysteine 64. Disordered regions lie at residues 113-146 (EAEA…DSPE) and 242-269 (PLME…KTPN). A compositionally biased stretch (polar residues) spans 256-269 (SVDQSSSTGSKTPN). The active-site Proton acceptor is histidine 419. The disordered stretch occupies residues 496-761 (LKQNGFPQSP…LRKKSFSILS (266 aa)). Pro residues predominate over residues 555-566 (PLSPVPPVPPIP). Residues 577–640 (KNDALAKREE…ASKAEEDRRL (64 aa)) are a coiled coil. Over residues 580-649 (ALAKREEKER…LSTENGKEKQ (70 aa)) the composition is skewed to basic and acidic residues. Positions 655 to 666 (RLKRGSKSLSHR) are enriched in basic residues. Low complexity predominate over residues 692 to 710 (SQSGPTSEQQQQQRQQSPP). Pro residues predominate over residues 712–722 (HDQPPNSPQPG). Residues 725 to 743 (TIREDEQVNHKDSKHERTG) are compositionally biased toward basic and acidic residues. Residues 744–761 (HGKWRSFSLRKKSFSILS) show a composition bias toward basic residues.

It belongs to the peptidase C19 family. Interacts with creA, creC and qutD.

The enzyme catalyses Thiol-dependent hydrolysis of ester, thioester, amide, peptide and isopeptide bonds formed by the C-terminal Gly of ubiquitin (a 76-residue protein attached to proteins as an intracellular targeting signal).. Functionally, ubiquitin thioesterase component of the regulatory network controlling carbon source utilization through ubiquitination and deubiquitination involving creA, creB, creC, creD and acrB. Deubiquitinates the creA catabolic repressor and the quinate permease qutD. Also plays a role in response to carbon starvation and the control of extracellular proteases activity. The chain is Probable ubiquitin carboxyl-terminal hydrolase creB (creB) from Neosartorya fischeri (strain ATCC 1020 / DSM 3700 / CBS 544.65 / FGSC A1164 / JCM 1740 / NRRL 181 / WB 181) (Aspergillus fischerianus).